The sequence spans 141 residues: Mite group 2 allergen Tyr p 2 (141 aa).

A signal peptide spans 1–15 (MKFLILFALVAVAAA). Intrachain disulfides connect cysteine 23–cysteine 132, cysteine 36–cysteine 41, and cysteine 87–cysteine 92. The N-linked (GlcNAc...) asparagine glycan is linked to asparagine 103.

Belongs to the NPC2 family.

Its subcellular location is the secreted. This chain is Mite group 2 allergen Tyr p 2, found in Tyrophagus putrescentiae (Mold mite).